The primary structure comprises 150 residues: MVHTTSPLLLLLLLSLALVAPSLSARKCSLTGKWTNNLGSIMTIRAVNSRGEFTGTYLTAVADNPGNITLSPLLGIQHKRASQPTFGFTVHWNFSESTTVFTGQCFIDRNGKEVLKTMWLLRSSVNDISYDWKATRVGYNNFTRLCTVEE.

Positions 1-24 are cleaved as a signal peptide; that stretch reads MVHTTSPLLLLLLLSLALVAPSLS. One can recognise an Avidin-like domain in the interval 26–147; the sequence is RKCSLTGKWT…GYNNFTRLCT (122 aa). The cysteines at positions 28 and 105 are disulfide-linked. Biotin-binding residues include Asn-36, Ser-40, Tyr-57, Thr-59, and Asp-63. 2 N-linked (GlcNAc...) asparagine glycosylation sites follow: Asn-67 and Asn-93. Biotin-binding residues include Ser-95 and Asn-140. A glycan (N-linked (GlcNAc...) asparagine) is linked at Asn-141.

It belongs to the avidin/streptavidin family. Homotetramer.

It is found in the secreted. In terms of biological role, forms a strong non-covalent specific complex with biotin. The protein is Avidin-related protein 4/5 (AVR4) of Gallus gallus (Chicken).